The sequence spans 787 residues: LPS-assembly protein LptD (787 aa).

Positions 1-24 (MKKSFPTLLATLVWSALYSQHALA) are cleaved as a signal peptide.

The protein belongs to the LptD family. Component of the lipopolysaccharide transport and assembly complex. Interacts with LptE and LptA.

It localises to the cell outer membrane. Its function is as follows. Together with LptE, is involved in the assembly of lipopolysaccharide (LPS) at the surface of the outer membrane. The protein is LPS-assembly protein LptD of Pectobacterium atrosepticum (strain SCRI 1043 / ATCC BAA-672) (Erwinia carotovora subsp. atroseptica).